The primary structure comprises 155 residues: Telokin-like protein 20 homolog (155 aa).

The disordered stretch occupies residues 109–155 (KRAVAPPHHEPEPVPAEEGAVADRAEPESGDAPPSPKKQKLDEREQD).

The protein is Telokin-like protein 20 homolog of Orgyia pseudotsugata multicapsid polyhedrosis virus (OpMNPV).